Here is an 85-residue protein sequence, read N- to C-terminus: Homeobox protein liguleless 3 (85 aa).

Residues 1–21 form the ELK domain; the sequence is ELKEMLLKKYSGCLSRLRSEF. The homeobox; TALE-type DNA-binding region spans 22–85; it reads LKKRKKGKLP…NQRKRHWKPS (64 aa).

The protein belongs to the TALE/KNOX homeobox family.

The protein resides in the nucleus. Probably binds to the DNA sequence 5'-TGAC-3'. The chain is Homeobox protein liguleless 3 (LG3) from Zea mays (Maize).